A 112-amino-acid polypeptide reads, in one-letter code: Peptidyl-prolyl cis-trans isomerase FKBP12 (112 aa).

Residues M1 to C26 are disordered. One can recognise a PPIase FKBP-type domain in the interval G19–Q112. A disulfide bridge links C26 with C80.

It belongs to the FKBP-type PPIase family. Interacts with FIP37 and with the immunosuppressive drug FK506. Its interaction with FIP37 is inhibited by FK506. Interacts with TOR in a rapamycin-dependent manner.

The protein resides in the cytoplasm. It carries out the reaction [protein]-peptidylproline (omega=180) = [protein]-peptidylproline (omega=0). Its function is as follows. PPIases accelerate the folding of proteins. It catalyzes the cis-trans isomerization of proline imidic peptide bonds in oligopeptides. Mediates rapamycin inactivation of TOR protein kinase activity. This Arabidopsis thaliana (Mouse-ear cress) protein is Peptidyl-prolyl cis-trans isomerase FKBP12 (FKBP12).